A 153-amino-acid chain; its full sequence is Regulatory protein RecX (153 aa).

Belongs to the RecX family.

The protein resides in the cytoplasm. Modulates RecA activity. The chain is Regulatory protein RecX from Pseudomonas aeruginosa (strain UCBPP-PA14).